Consider the following 204-residue polypeptide: Probable UMP-CMP kinase 1 (204 aa).

Position 31–36 (31–36) interacts with ATP; that stretch reads GSGKGT. The NMP stretch occupies residues 51 to 80; it reads SAGDLLRAEIKSGSEFGAMIQSMIAEGRIV. Residues arginine 57, 78-80, and 105-108 contribute to the a ribonucleoside 5'-phosphate site; these read RIV and GFPR. Asparagine 112 is a binding site for CMP. The LID stretch occupies residues 143–151; that stretch reads SRNQGREDD. Residue arginine 144 participates in ATP binding. A ribonucleoside 5'-phosphate contacts are provided by arginine 148 and arginine 159. Residue lysine 187 coordinates ATP.

This sequence belongs to the adenylate kinase family. UMP-CMP kinase subfamily. In terms of assembly, monomer. It depends on Mg(2+) as a cofactor.

The protein localises to the cytoplasm. The protein resides in the nucleus. It carries out the reaction CMP + ATP = CDP + ADP. The catalysed reaction is dCMP + ATP = dCDP + ADP. The enzyme catalyses UMP + ATP = UDP + ADP. Catalyzes the phosphorylation of pyrimidine nucleoside monophosphates at the expense of ATP. Plays an important role in de novo pyrimidine nucleotide biosynthesis. Has preference for UMP and CMP as phosphate acceptors. The sequence is that of Probable UMP-CMP kinase 1 (UMK1) from Arabidopsis thaliana (Mouse-ear cress).